A 65-amino-acid polypeptide reads, in one-letter code: Large ribosomal subunit protein bL35 (65 aa).

Belongs to the bacterial ribosomal protein bL35 family.

This Thermotoga petrophila (strain ATCC BAA-488 / DSM 13995 / JCM 10881 / RKU-1) protein is Large ribosomal subunit protein bL35.